A 430-amino-acid polypeptide reads, in one-letter code: Methylthioribose kinase 1 (430 aa).

ATP-binding positions include 52-56, Lys-71, and 125-127; these read DGNLN and RYI. Substrate is bound at residue Asn-56. Residue Asp-246 participates in substrate binding. 263-265 is an ATP binding site; sequence DPE. Residue Arg-373 participates in substrate binding.

Belongs to the methylthioribose kinase family. In terms of assembly, homodimer.

The enzyme catalyses 5-(methylsulfanyl)-D-ribose + ATP = 5-(methylsulfanyl)-alpha-D-ribose 1-phosphate + ADP + H(+). It participates in amino-acid biosynthesis; L-methionine biosynthesis via salvage pathway; S-methyl-5-thio-alpha-D-ribose 1-phosphate from S-methyl-5'-thioadenosine (hydrolase route): step 2/2. In terms of biological role, catalyzes the phosphorylation of methylthioribose into methylthioribose-1-phosphate. This chain is Methylthioribose kinase 1, found in Oryza sativa subsp. japonica (Rice).